A 488-amino-acid polypeptide reads, in one-letter code: Homoserine O-acetyltransferase (488 aa).

Positions 47-355 (NAILVCHALT…SYGHDAFLLE (309 aa)) constitute an AB hydrolase-1 domain. The active-site Nucleophile is serine 153. Arginine 222 contributes to the substrate binding site. Residues aspartate 316 and histidine 349 contribute to the active site. Aspartate 350 serves as a coordination point for substrate. CBS domains lie at 376 to 433 (MTEK…CSKL) and 437 to 488 (MTRD…RLIG).

This sequence belongs to the AB hydrolase superfamily. MetX family. Homodimer.

It localises to the cytoplasm. The enzyme catalyses L-homoserine + acetyl-CoA = O-acetyl-L-homoserine + CoA. It functions in the pathway amino-acid biosynthesis; L-methionine biosynthesis via de novo pathway; O-acetyl-L-homoserine from L-homoserine: step 1/1. In terms of biological role, transfers an acetyl group from acetyl-CoA to L-homoserine, forming acetyl-L-homoserine. The chain is Homoserine O-acetyltransferase from Methanococcoides burtonii (strain DSM 6242 / NBRC 107633 / OCM 468 / ACE-M).